The following is a 361-amino-acid chain: Phosphoserine aminotransferase (361 aa).

L-glutamate is bound at residue Arg-42. Residues 76-77, Trp-102, Thr-154, Asp-173, and Gln-196 each bind pyridoxal 5'-phosphate; that span reads GR. At Lys-197 the chain carries N6-(pyridoxal phosphate)lysine. Position 238 to 239 (238 to 239) interacts with pyridoxal 5'-phosphate; it reads NT.

This sequence belongs to the class-V pyridoxal-phosphate-dependent aminotransferase family. SerC subfamily. In terms of assembly, homodimer. Pyridoxal 5'-phosphate is required as a cofactor.

The protein resides in the cytoplasm. It carries out the reaction O-phospho-L-serine + 2-oxoglutarate = 3-phosphooxypyruvate + L-glutamate. The enzyme catalyses 4-(phosphooxy)-L-threonine + 2-oxoglutarate = (R)-3-hydroxy-2-oxo-4-phosphooxybutanoate + L-glutamate. It participates in amino-acid biosynthesis; L-serine biosynthesis; L-serine from 3-phospho-D-glycerate: step 2/3. The protein operates within cofactor biosynthesis; pyridoxine 5'-phosphate biosynthesis; pyridoxine 5'-phosphate from D-erythrose 4-phosphate: step 3/5. Catalyzes the reversible conversion of 3-phosphohydroxypyruvate to phosphoserine and of 3-hydroxy-2-oxo-4-phosphonooxybutanoate to phosphohydroxythreonine. The sequence is that of Phosphoserine aminotransferase from Idiomarina loihiensis (strain ATCC BAA-735 / DSM 15497 / L2-TR).